Reading from the N-terminus, the 367-residue chain is Probable L-aspartate decarboxylase (367 aa).

The residue at position 216 (Lys216) is an N6-(pyridoxal phosphate)lysine.

This sequence belongs to the group II decarboxylase family. MfnA subfamily. Pyridoxal 5'-phosphate serves as cofactor.

It carries out the reaction L-aspartate + H(+) = beta-alanine + CO2. It participates in cofactor biosynthesis; coenzyme A biosynthesis. Functionally, catalyzes the decarboxylation of L-aspartate to produce beta-alanine. The protein is Probable L-aspartate decarboxylase of Archaeoglobus fulgidus (strain ATCC 49558 / DSM 4304 / JCM 9628 / NBRC 100126 / VC-16).